Reading from the N-terminus, the 570-residue chain is CDKN2A-interacting protein (570 aa).

At Ala-2 the chain carries N-acetylalanine. The region spanning 19–126 (VETLRCEGET…KVKKRGISSS (108 aa)) is the XRN2-binding (XTBD) domain. Residues 122 to 345 (GISSSNEGVE…TSLLMPKSSS (224 aa)) form a disordered region. At Ser-124 the chain carries Phosphoserine. Basic and acidic residues predominate over residues 147–162 (VERDHGKKSAKTDRSA). The span at 167 to 183 (SSGSKGSSTKSESSGTS) shows a compositional bias: low complexity. Lys-176 participates in a covalent cross-link: Glycyl lysine isopeptide (Lys-Gly) (interchain with G-Cter in SUMO1). Over residues 184-198 (ARSNSGVSHQNSSTS) the composition is skewed to polar residues. The span at 203–221 (SVCSQSSSNSSQVTSAGSG) shows a compositional bias: low complexity. The span at 224 to 233 (SEPEAPDKHG) shows a compositional bias: basic and acidic residues. The residue at position 234 (Ser-234) is a Phosphoserine. 2 stretches are compositionally biased toward low complexity: residues 234-248 (SASF…SLNS) and 271-301 (SSVS…PLLS). Residues 302-317 (CKSSSETASSGLTTKA) show a composition bias toward polar residues. The segment covering 318-345 (SSEANISSSVSKNSSSSGTSLLMPKSSS) has biased composition (low complexity). Ser-378 bears the Phosphoserine mark. The disordered stretch occupies residues 383–407 (SQLASKSSSQSSTSQLPSKSTSQSS). The 76-residue stretch at 452-527 (NHGELLNAAI…SREALKLFLK (76 aa)) folds into the DRBM domain.

This sequence belongs to the CARF family. As to quaternary structure, interacts with CDKN2A/p14ARF, p53/TP53 and MDM2. Interacts with CHEK2 and MAPK3. Interacts with XRN2. In terms of processing, may be ubiquitinated.

The protein resides in the nucleus. The protein localises to the nucleoplasm. In terms of biological role, regulates DNA damage response and cell proliferation in a dose-dependent manner through a number of signaling pathways involved in cell proliferation, apoptosis and senescence. This is CDKN2A-interacting protein (Cdkn2aip) from Rattus norvegicus (Rat).